The following is a 295-amino-acid chain: Acetylglutamate kinase (295 aa).

Substrate-binding positions include 66–67, Arg-88, and Asn-193; that span reads GG.

Belongs to the acetylglutamate kinase family. ArgB subfamily.

It localises to the cytoplasm. It catalyses the reaction N-acetyl-L-glutamate + ATP = N-acetyl-L-glutamyl 5-phosphate + ADP. It functions in the pathway amino-acid biosynthesis; L-arginine biosynthesis; N(2)-acetyl-L-ornithine from L-glutamate: step 2/4. Functionally, catalyzes the ATP-dependent phosphorylation of N-acetyl-L-glutamate. The polypeptide is Acetylglutamate kinase (Allorhizobium ampelinum (strain ATCC BAA-846 / DSM 112012 / S4) (Agrobacterium vitis (strain S4))).